Here is a 407-residue protein sequence, read N- to C-terminus: ATP-citrate synthase subunit alpha chain protein 1 (407 aa).

The citrate site is built by N327, T329, and R360.

It belongs to the succinate/malate CoA ligase beta subunit family. As to quaternary structure, heterooctamer of 4 alpha and 4 beta chains.

The protein resides in the cytoplasm. It is found in the cytosol. The enzyme catalyses oxaloacetate + acetyl-CoA + ADP + phosphate = citrate + ATP + CoA. Functionally, ATP citrate-lyase is the primary enzyme responsible for the synthesis of cytosolic acetyl-CoA, used for the elongation of fatty acids and biosynthesis of isoprenoids, flavonoids and malonated derivatives. May supply substrate to the cytosolic acetyl-CoA carboxylase, which generates the malonyl-CoA used for the synthesis of a multitude of compounds, including very long chain fatty acids and flavonoids. In contrast to all known animal ACL enzymes having a homomeric structure, plant ACLs are composed of alpha and beta chains. This chain is ATP-citrate synthase subunit alpha chain protein 1 (ACLA-1), found in Oryza sativa subsp. japonica (Rice).